Consider the following 736-residue polypeptide: RNA-binding protein RMD9-like, mitochondrial (736 aa).

Disordered regions lie at residues 1 to 28 (MFRFAQPANVLKGKAPSQIVPPHPKTNS), 124 to 148 (PRRSNMRNNGNNNMNNGRRTEHPNT), and 566 to 618 (NRGI…GTPV). A mitochondrion-targeting transit peptide spans 1–79 (MFRFAQPANV…HFKNQFSSRN (79 aa)). Over residues 125–140 (RRSNMRNNGNNNMNNG) the composition is skewed to low complexity. The span at 566–578 (NRGISSSSPMSAV) shows a compositional bias: polar residues. Residues 579–596 (NSLAPSTTNTPSPSLSPI) are compositionally biased toward low complexity. Positions 602 to 613 (LSSARNTPNKIW) are enriched in polar residues.

Belongs to the RMD9 family. Monomer. Phosphorylated. Phosphorylation promotes binding to RNA.

It is found in the mitochondrion inner membrane. May be involved in the processing or stability of mitochondrial mRNAs. The chain is RNA-binding protein RMD9-like, mitochondrial from Candida glabrata (strain ATCC 2001 / BCRC 20586 / JCM 3761 / NBRC 0622 / NRRL Y-65 / CBS 138) (Yeast).